A 439-amino-acid chain; its full sequence is Thymidine phosphorylase (439 aa).

This sequence belongs to the thymidine/pyrimidine-nucleoside phosphorylase family. In terms of assembly, homodimer.

The enzyme catalyses thymidine + phosphate = 2-deoxy-alpha-D-ribose 1-phosphate + thymine. It functions in the pathway pyrimidine metabolism; dTMP biosynthesis via salvage pathway; dTMP from thymine: step 1/2. In terms of biological role, the enzymes which catalyze the reversible phosphorolysis of pyrimidine nucleosides are involved in the degradation of these compounds and in their utilization as carbon and energy sources, or in the rescue of pyrimidine bases for nucleotide synthesis. The sequence is that of Thymidine phosphorylase from Mesorhizobium japonicum (strain LMG 29417 / CECT 9101 / MAFF 303099) (Mesorhizobium loti (strain MAFF 303099)).